The chain runs to 73 residues: Defensin-like protein 6 (73 aa).

The signal sequence occupies residues Met1–Gly26. 4 cysteine pairs are disulfide-bonded: Cys29–Cys73, Cys40–Cys60, Cys46–Cys67, and Cys50–Cys69.

It belongs to the DEFL family.

The protein resides in the secreted. Functionally, confers broad-spectrum resistance to pathogens. This chain is Defensin-like protein 6 (PDF2.5), found in Arabidopsis thaliana (Mouse-ear cress).